The primary structure comprises 250 residues: NAD(P)H-quinone oxidoreductase subunit K (250 aa).

4 residues coordinate [4Fe-4S] cluster: Cys60, Cys61, Cys125, and Cys156. The segment at 230 to 250 (ELNTSEIDASPASQPSSTYES) is disordered. Residues 231-250 (LNTSEIDASPASQPSSTYES) are compositionally biased toward polar residues.

The protein belongs to the complex I 20 kDa subunit family. In terms of assembly, NDH-1 can be composed of about 15 different subunits; different subcomplexes with different compositions have been identified which probably have different functions. [4Fe-4S] cluster serves as cofactor.

The protein localises to the cellular thylakoid membrane. The catalysed reaction is a plastoquinone + NADH + (n+1) H(+)(in) = a plastoquinol + NAD(+) + n H(+)(out). It catalyses the reaction a plastoquinone + NADPH + (n+1) H(+)(in) = a plastoquinol + NADP(+) + n H(+)(out). NDH-1 shuttles electrons from an unknown electron donor, via FMN and iron-sulfur (Fe-S) centers, to quinones in the respiratory and/or the photosynthetic chain. The immediate electron acceptor for the enzyme in this species is believed to be plastoquinone. Couples the redox reaction to proton translocation, and thus conserves the redox energy in a proton gradient. Cyanobacterial NDH-1 also plays a role in inorganic carbon-concentration. In Prochlorococcus marinus (strain MIT 9303), this protein is NAD(P)H-quinone oxidoreductase subunit K.